The primary structure comprises 113 residues: Cell division protein FtsB (113 aa).

The Cytoplasmic portion of the chain corresponds to 1-3 (MRL). The helical transmembrane segment at 4-21 (ISLLLFVLLLAIQYPLWL) threads the bilayer. Residues 22–113 (GKGGWLRVWE…PNSPAATGRH (92 aa)) lie on the Periplasmic side of the membrane. Residues 34-63 (HQVQEQATRNQMLKLRNAKLEGEVKDLQDG) are a coiled coil. The interval 93–113 (KVSATPPLPPPPNSPAATGRH) is disordered.

Belongs to the FtsB family. As to quaternary structure, part of a complex composed of FtsB, FtsL and FtsQ.

The protein localises to the cell inner membrane. In terms of biological role, essential cell division protein. May link together the upstream cell division proteins, which are predominantly cytoplasmic, with the downstream cell division proteins, which are predominantly periplasmic. This Cupriavidus pinatubonensis (strain JMP 134 / LMG 1197) (Cupriavidus necator (strain JMP 134)) protein is Cell division protein FtsB.